The following is a 737-amino-acid chain: Polyribonucleotide nucleotidyltransferase (737 aa).

Residues Asp-514 and Asp-520 each contribute to the Mg(2+) site. One can recognise a KH domain in the interval 580–639 (PRIITVKIPVDKIGEVIGPKGKMINQIQEDTGADITIEDDGTIYIGAQAGSQAEAARATI). Residues 651 to 723 (GERYLGTVVK…SRGKLSLIPV (73 aa)) enclose the S1 motif domain.

This sequence belongs to the polyribonucleotide nucleotidyltransferase family. It depends on Mg(2+) as a cofactor.

Its subcellular location is the cytoplasm. It carries out the reaction RNA(n+1) + phosphate = RNA(n) + a ribonucleoside 5'-diphosphate. Involved in mRNA degradation. Catalyzes the phosphorolysis of single-stranded polyribonucleotides processively in the 3'- to 5'-direction. The sequence is that of Polyribonucleotide nucleotidyltransferase from Streptomyces griseus subsp. griseus (strain JCM 4626 / CBS 651.72 / NBRC 13350 / KCC S-0626 / ISP 5235).